A 212-amino-acid chain; its full sequence is FMN-dependent NADH:quinone oxidoreductase (212 aa).

FMN is bound by residues serine 9, 15–17 (SVS), and 138–141 (TRGG).

The protein belongs to the azoreductase type 1 family. In terms of assembly, homodimer. The cofactor is FMN.

It catalyses the reaction 2 a quinone + NADH + H(+) = 2 a 1,4-benzosemiquinone + NAD(+). The catalysed reaction is N,N-dimethyl-1,4-phenylenediamine + anthranilate + 2 NAD(+) = 2-(4-dimethylaminophenyl)diazenylbenzoate + 2 NADH + 2 H(+). In terms of biological role, quinone reductase that provides resistance to thiol-specific stress caused by electrophilic quinones. Also exhibits azoreductase activity. Catalyzes the reductive cleavage of the azo bond in aromatic azo compounds to the corresponding amines. The sequence is that of FMN-dependent NADH:quinone oxidoreductase from Delftia acidovorans (strain DSM 14801 / SPH-1).